The chain runs to 523 residues: Asparagine--tRNA ligase (523 aa).

The tract at residues 329–350 is disordered; it reads SARGDTPLAARSTARTPPVRTP.

The protein belongs to the class-II aminoacyl-tRNA synthetase family. In terms of assembly, homodimer.

The protein localises to the cytoplasm. It catalyses the reaction tRNA(Asn) + L-asparagine + ATP = L-asparaginyl-tRNA(Asn) + AMP + diphosphate + H(+). The chain is Asparagine--tRNA ligase from Treponema pallidum (strain Nichols).